Reading from the N-terminus, the 79-residue chain is Putative defensin-like protein 137 (79 aa).

An N-terminal signal peptide occupies residues 1–24 (MKKYFQPSFVILIIFTVLVLGVVG). Intrachain disulfides connect cysteine 33/cysteine 78, cysteine 42/cysteine 62, cysteine 47/cysteine 72, and cysteine 51/cysteine 74.

This sequence belongs to the DEFL family.

Its subcellular location is the secreted. The protein is Putative defensin-like protein 137 (LCR14) of Arabidopsis thaliana (Mouse-ear cress).